Here is a 301-residue protein sequence, read N- to C-terminus: Putative S-adenosyl-L-methionine-dependent methyltransferase MMAR_4850 (301 aa).

S-adenosyl-L-methionine contacts are provided by residues Asp127 and Asp156 to Leu157.

This sequence belongs to the UPF0677 family.

In terms of biological role, exhibits S-adenosyl-L-methionine-dependent methyltransferase activity. In Mycobacterium marinum (strain ATCC BAA-535 / M), this protein is Putative S-adenosyl-L-methionine-dependent methyltransferase MMAR_4850.